We begin with the raw amino-acid sequence, 124 residues long: Ragulator complex protein LAMTOR3 (124 aa).

The required for interaction with LAMTOR2 stretch occupies residues threonine 57–serine 70.

Belongs to the LAMTOR3 family. As to quaternary structure, part of the Ragulator complex composed of LAMTOR1, LAMTOR2, LAMTOR3, LAMTOR4 and LAMTOR5. LAMTOR4 and LAMTOR5 form a heterodimer that interacts, through LAMTOR1, with a LAMTOR2, LAMTOR3 heterodimer. Interacts with LAMTOR1 and LAMTOR2; the interaction is direct. The Ragulator complex interacts with both the mTORC1 complex and heterodimers constituted of the Rag GTPases RagA/RRAGA, RagB/RRAGB, RagC/RRAGC and RagD/RRAGD; regulated by amino acid availability. The Ragulator complex interacts with SLC38A9; the probable amino acid sensor. Component of the lysosomal folliculin complex (LFC), composed of FLCN, FNIP1 (or FNIP2), RagA/RRAGA or RagB/RRAGB GDP-bound, RagC/RRAGC or RagD/RRAGD GTP-bound, and Ragulator. Interacts with MAP2K1/MEK1 and MAPK2. Interacts with MORG1.

It is found in the late endosome membrane. As part of the Ragulator complex it is involved in amino acid sensing and activation of mTORC1, a signaling complex promoting cell growth in response to growth factors, energy levels, and amino acids. Activated by amino acids through a mechanism involving the lysosomal V-ATPase, the Ragulator plays a dual role for the small GTPases Rag (RagA/RRAGA, RagB/RRAGB, RagC/RRAGC and/or RagD/RRAGD): it (1) acts as a guanine nucleotide exchange factor (GEF), activating the small GTPases Rag and (2) mediates recruitment of Rag GTPases to the lysosome membrane. Activated Ragulator and Rag GTPases function as a scaffold recruiting mTORC1 to lysosomes where it is in turn activated. Adapter protein that enhances the efficiency of the MAP kinase cascade facilitating the activation of MAPK2. This Homo sapiens (Human) protein is Ragulator complex protein LAMTOR3.